The following is a 548-amino-acid chain: T-complex protein 1 subunit theta (548 aa).

Position 2 is an N-acetylalanine (Ala-2). Residues Tyr-47 and Gly-48 each coordinate ADP. Residue Asp-99 participates in Mg(2+) binding. ADP is bound by residues Gly-100, Thr-101, Asn-102, Phe-103, Met-169, Ser-170, Lys-171, Gly-412, and Asp-499. The ATP site is built by Gly-100, Thr-101, and Asn-102. Positions 170, 171, 412, 499, and 504 each coordinate ATP. Residue Tyr-505 is modified to Phosphotyrosine. The interval 529-548 (PAGGPKPPSGKKDWDEDQND) is disordered.

Component of the chaperonin-containing T-complex (TRiC), a hexadecamer composed of two identical back-to-back stacked rings enclosing a protein folding chamber. Each ring is made up of eight different subunits: TCP1/CCT1, CCT2, CCT3, CCT4, CCT5, CCT6A/CCT6, CCT7, CCT8.

It is found in the cytoplasm. The protein localises to the cytoskeleton. Its subcellular location is the microtubule organizing center. It localises to the centrosome. The protein resides in the cilium basal body. It carries out the reaction ATP + H2O = ADP + phosphate + H(+). Functionally, component of the chaperonin-containing T-complex (TRiC), a molecular chaperone complex that assists the folding of actin, tubulin and other proteins upon ATP hydrolysis. This chain is T-complex protein 1 subunit theta, found in Gallus gallus (Chicken).